The following is a 195-amino-acid chain: MAHGPNYKVKYRRRREGKTNYYRRYTYVLNRSDRVVVRLTNKYVIVQFVKFDPKGDITVAAAHSRELMKFGWKGDENNSTACYLTGYLAGLRAKKAGMTSASADLGLFTPTKGARIFYVLKGVIDSGVKVPMGDVGVNNDRLAGKHIAEYAKKLEQEDPDKYRGLFSRYLARGLDPKDLPAHFKEVLNSIKSGEK.

This sequence belongs to the universal ribosomal protein uL18 family. As to quaternary structure, part of the 50S ribosomal subunit. Contacts the 5S and 23S rRNAs.

This is one of the proteins that bind and probably mediate the attachment of the 5S RNA into the large ribosomal subunit, where it forms part of the central protuberance. This Metallosphaera sedula (strain ATCC 51363 / DSM 5348 / JCM 9185 / NBRC 15509 / TH2) protein is Large ribosomal subunit protein uL18.